A 413-amino-acid polypeptide reads, in one-letter code: Peptide chain release factor 1, mitochondrial (413 aa).

Residues 1–40 (MRVLIRPNFLSNLIRYCSRGTHSHDRSLRSVLSSNMIRLY) constitute a mitochondrion transit peptide. Glutamine 287 is subject to N5-methylglutamine.

This sequence belongs to the prokaryotic/mitochondrial release factor family. Methylation increases the termination efficiency of RF1. In terms of tissue distribution, mostly expressed in seedlings, stems and adult plants, and, to a lower extent, in siliques. Barely detected in etiolated seedlings and roots.

Its subcellular location is the mitochondrion. Its function is as follows. Peptide chain release factor 1 directs the termination of translation in response to the peptide chain termination codons UAG and UAA in mitochondria. This is Peptide chain release factor 1, mitochondrial from Arabidopsis thaliana (Mouse-ear cress).